A 246-amino-acid chain; its full sequence is DNA repair protein RecO (246 aa).

It belongs to the RecO family.

Functionally, involved in DNA repair and RecF pathway recombination. The chain is DNA repair protein RecO from Nitrosococcus oceani (strain ATCC 19707 / BCRC 17464 / JCM 30415 / NCIMB 11848 / C-107).